We begin with the raw amino-acid sequence, 284 residues long: Probable 3-mercaptopyruvate sulfurtransferase (284 aa).

2 consecutive Rhodanese domains span residues 17-138 (SEPD…ALTN) and 168-281 (GQPG…RPVA). Residue Arg182 coordinates substrate. Residue Cys241 is the Cysteine persulfide intermediate of the active site. Residues 241-247 (CGSGVTA) form a substrate specificity region.

It is found in the cytoplasm. It catalyses the reaction 2-oxo-3-sulfanylpropanoate + [thioredoxin]-dithiol = [thioredoxin]-disulfide + hydrogen sulfide + pyruvate + H(+). Functionally, catalyzes the transfer of sulfur from 3-mercaptopyruvate to a thiol-containing acceptor to form an intramolecular disulfide releasing hydrogen sulfide and pyruvate. The polypeptide is Probable 3-mercaptopyruvate sulfurtransferase (sseA) (Pseudomonas aeruginosa (strain ATCC 15692 / DSM 22644 / CIP 104116 / JCM 14847 / LMG 12228 / 1C / PRS 101 / PAO1)).